The chain runs to 779 residues: MDALMPAPQSADLRRITLANGLSVALCHDSRLKRSAASLRVAAGSHDAPLAWPGLAHFLEHLFFLGTERFQAGENLMTFVQRHGGQVNASTRERTTDFFFELPQTAFAQGLERLCDMLARPRMTVADQLREREVLHAEFIAWRGDANARDQLRLLAAVNPQHPLRGFHAGNRYSLSVPNPAFQQALQNFYQRFYQAAQMTLCLSGPQSLAELETLANTHGALFASGTKVRQHAPAPLMKHPTSLEHIDEQKHLLFACEHLPAKADEAVAFLCHWLNAAQPGGLIATLIERGLIESLNATPLYQFDGQLLLDIELNANRPSASTIKSLLLSWLRFFKTQWPALIEEYQRLEQRRLQMSGALTLAHHHCRELPAQLSDQGADALRELLEQLTSNALIGSAPVDNLDSTLAEWRLPAPNPFLESIAEDSPEAALYLRWELPSAQPTLWQMLNTRLTPLIEDARQAGVNLTFSAYGNYWQIQLNGLRAPMVAVIEHALQRLRHAAPGPLTHAGQASEPLIPVRQLLKHLADHYLISKQAQTTGDLHTVWKHSRWISFASGFCAASQLQLNTALNATPGTRQTDVPTLPAIRLGKRWSSEASSSSENAVLVFCPAPTASVEDEAAWRLLAHLLQAPFYQRLRVELQLGYAVFSGIRQIAGRTGLLFGVQSPTCSADQLFQHIEAFIGRLPALIRTADLPEQIRVLSAQFDPANMPDQQQADIHWQAYLAGHRAHHSQALQRALSNLDTHSLLATANQLIDAAGGWLIVASRPASAAVPLSLPER.

His57 lines the Zn(2+) pocket. Glu60 (proton acceptor) is an active-site residue. Zn(2+)-binding residues include His61 and Glu138.

Belongs to the peptidase M16 family. Requires Zn(2+) as cofactor.

The protein operates within cofactor biosynthesis; pyrroloquinoline quinone biosynthesis. Required for coenzyme pyrroloquinoline quinone (PQQ) biosynthesis. It is thought that this protein is a protease that cleaves peptides bond in a small peptide (gene pqqA), providing the glutamate and tyrosine residues which are necessary for the synthesis of PQQ. The chain is Coenzyme PQQ synthesis protein F (pqqF) from Pseudomonas syringae pv. tomato (strain ATCC BAA-871 / DC3000).